The chain runs to 456 residues: MKKNTGTIISISGFVLKIEFNESELPEIGFALEYHTHQGTYLAEVVQHTGINTVSAIAIGEVSGLARGTEVVNLGHPIEVPVGETVQGRMLNVYGKAIDGKPEPAAEVKWPIFRDQPLLRELDTNKEILYTGIKVIDLICPILKGGKTGLFGGAGVGKSVLMQELINNISMLGGNSVFTGVGERVREGIGLYKELEASGVLPQTTVVLGQMNESPGVRMRVALTGLTIAEYLRDEEKKDVLLFIDNVFRFIQAGSEVSSLQGKIPITGGYQSTLSKEVGDFQDRIASTKNGSITSIQCVFLPADDIDDPSAVATFSHLDSTIVLERSIAALGIFPAVNPLQSFSRALNPTFVGERHYQLAAQVKFILQRYMELQEIINVLGMAELSDEDRKLVHRARKIRNFLSQPFYVSEKFTGTEGTFVEIEDLLGSIERILNGDYDERSERDFLFIGSYKDLK.

Residue 152–159 (GGAGVGKS) participates in ATP binding.

The protein belongs to the ATPase alpha/beta chains family. F-type ATPases have 2 components, CF(1) - the catalytic core - and CF(0) - the membrane proton channel. CF(1) has five subunits: alpha(3), beta(3), gamma(1), delta(1), epsilon(1). CF(0) has three main subunits: a(1), b(2) and c(9-12). The alpha and beta chains form an alternating ring which encloses part of the gamma chain. CF(1) is attached to CF(0) by a central stalk formed by the gamma and epsilon chains, while a peripheral stalk is formed by the delta and b chains.

The protein localises to the cell membrane. It carries out the reaction ATP + H2O + 4 H(+)(in) = ADP + phosphate + 5 H(+)(out). In terms of biological role, produces ATP from ADP in the presence of a proton gradient across the membrane. The catalytic sites are hosted primarily by the beta subunits. The chain is ATP synthase subunit beta 1 from Listeria monocytogenes serotype 4b (strain F2365).